The sequence spans 387 residues: MEGVLSQLAVLVLEDGTKFHGRAIGAKGITVGEVVFNTSITGYQEIITDPSYSHQIVTLTHPHIGNVGTNSNDEESSKIYIKGLIIRDLSLTASNYRNKKSFSSYLKENNIIAISDIDTRKLTRILRTKGSQNGCIIEDKKQNYSIAYNKAKNFISLQDLDLAKKVSTKSIYNWDQGSFTFKKNNFFSINKQKFLFHVVVYDFGVKRNILRMLVDRGCYLTVVPAITDPKTVLNLSPDGIFLSNGPGDPRPCDYAIHAIQYFLKTNIPIFGICLGHQLLALASGAKIVKMKFGHHGGNHPVKDIKNNRVIITSQNHSFTVDTENLPNNIEITHSSLFDGTLQGLSLTNKSAFSFQGHPEASPGPHDASYLFDYFIKLIVSQKTTLSN.

The tract at residues Met-1 to Phe-196 is CPSase. Ser-51, Gly-245, and Gly-247 together coordinate L-glutamine. A Glutamine amidotransferase type-1 domain is found at His-197 to Thr-384. Cys-273 (nucleophile) is an active-site residue. L-glutamine-binding residues include Leu-274, Gln-277, Asn-315, and Phe-318. Active-site residues include His-357 and Glu-359.

This sequence belongs to the CarA family. In terms of assembly, composed of two chains; the small (or glutamine) chain promotes the hydrolysis of glutamine to ammonia, which is used by the large (or ammonia) chain to synthesize carbamoyl phosphate. Tetramer of heterodimers (alpha,beta)4.

It carries out the reaction hydrogencarbonate + L-glutamine + 2 ATP + H2O = carbamoyl phosphate + L-glutamate + 2 ADP + phosphate + 2 H(+). The catalysed reaction is L-glutamine + H2O = L-glutamate + NH4(+). The protein operates within amino-acid biosynthesis; L-arginine biosynthesis; carbamoyl phosphate from bicarbonate: step 1/1. It participates in pyrimidine metabolism; UMP biosynthesis via de novo pathway; (S)-dihydroorotate from bicarbonate: step 1/3. Its function is as follows. Small subunit of the glutamine-dependent carbamoyl phosphate synthetase (CPSase). CPSase catalyzes the formation of carbamoyl phosphate from the ammonia moiety of glutamine, carbonate, and phosphate donated by ATP, constituting the first step of 2 biosynthetic pathways, one leading to arginine and/or urea and the other to pyrimidine nucleotides. The small subunit (glutamine amidotransferase) binds and cleaves glutamine to supply the large subunit with the substrate ammonia. In Buchnera aphidicola subsp. Acyrthosiphon pisum (strain APS) (Acyrthosiphon pisum symbiotic bacterium), this protein is Carbamoyl phosphate synthase small chain.